The chain runs to 543 residues: Ipecac alkaloid beta-glucosidase 2 (543 aa).

A beta-D-glucoside is bound by residues Gln-36, His-140, 185-186 (NE), Tyr-350, Glu-422, Trp-471, and Phe-487. Glu-186 acts as the Proton donor in catalysis. Glu-422 functions as the Nucleophile in the catalytic mechanism.

This sequence belongs to the glycosyl hydrolase 1 family.

Its subcellular location is the cytoplasm. It localises to the cytosol. The catalysed reaction is deacetylipecoside + H2O = deacetylipecoside aglycone + D-glucose. The enzyme catalyses deacetylisoipecoside + H2O = deacetylisoipecoside aglycone + D-glucose. Its pathway is alkaloid biosynthesis. Functionally, beta-glucosidase catalyzing deglucosylation on N-deacetylisoipecoside and N-deacetylipecoside. This is Ipecac alkaloid beta-glucosidase 2 from Carapichea ipecacuanha (Ipecac).